A 467-amino-acid chain; its full sequence is Mothers against decapentaplegic homolog 2 (467 aa).

N-acetylserine is present on S2. T8 carries the phosphothreonine modification. Residues 10-176 (PVVKRLLGWK…YQRVETPVLP (167 aa)) enclose the MH1 domain. Position 19 is an N6-acetyllysine (K19). C74, C149, C161, and H166 together coordinate Zn(2+). A compositionally biased stretch (polar residues) spans 207 to 217 (PAGIEPQSNYI). Residues 207-251 (PAGIEPQSNYIPETPPPGYISEDGETSDQQLNQSMDTGSPAELSP) are disordered. T220 is modified (phosphothreonine). The PY-motif motif lies at 221–225 (PPPGY). Positions 233–243 (SDQQLNQSMDT) are enriched in polar residues. S240 is modified (phosphoserine; by CAMK2). S245, S250, S255, S458, S460, and S464 each carry phosphoserine. The 194-residue stretch at 274–467 (WCSIAYYELN…SPSVRCSSMS (194 aa)) folds into the MH2 domain. Phosphoserine; by TGFBR1 is present on residues S465 and S467.

Belongs to the dwarfin/SMAD family. Monomer; in the absence of TGF-beta. Heterodimer; in the presence of TGF-beta. Forms a heterodimer with co-SMAD, SMAD4, in the nucleus to form the transactivation complex SMAD2/SMAD4. Found in a complex with SMAD3 and TRIM33 upon addition of TGF-beta. Identified in a complex that contains at least ZNF451, SMAD2, SMAD3 and SMAD4. Interacts (via the MH2 domain) with ZFYVE9; may form trimers with the SMAD4 co-SMAD. Interacts with TAZ/WWRT1. Interacts with FOXH1. Interacts with SNW1. Interacts with CREB-binding protein (CBP) and EP300. Interacts with SNON. Interacts with ALK4/ACVR1B. Interacts with SKOR1. Interacts with SKOR2. Interacts with PRDM16. Interacts (via MH2 domain) with LEMD3. Interacts with RBPMS. Interacts with WWP1. Interacts (dephosphorylated form, via the MH1 and MH2 domains) with RANBP3 (via its C-terminal R domain); the interaction results in the export of dephosphorylated SMAD3 out of the nucleus and termination of the TGF-beta signaling. Interacts with PDPK1 (via PH domain). Interacts with DAB2; the interactions are enhanced upon TGF-beta stimulation. Interacts with USP15. Interacts with PPP5C. Interacts with LDLRAD4 (via the SMAD interaction motif). Interacts (via MH2 domain) with PMEPA1 (via the SMAD interaction motif). Interacts with ZFHX3. Interacts with ZNF451. Interacts with SMURF2 when phosphorylated on Ser-465/467. Interacts with PPM1A. Interacts with TGF-beta. Interacts with TGFBR1. Interacts with TGIF. Interacts with SMAD3 and TRIM33. Interacts with ZNF580. Interacts with NEDD4L in response to TGF-beta. Interacts with HGS. Interacts with AIP1. Interacts with WWP1. Interacts with PML. Interacts weakly with ZNF8. Interacts (when phosphorylated) with RNF111; RNF111 acts as an enhancer of the transcriptional responses by mediating ubiquitination and degradation of SMAD2 inhibitors. Interacts with YAP1 (when phosphorylated at 'Ser-112'). Interacts when phosphorylated with IPO7; the interaction facilitates translocation of SMAD2 to the nucleus. Interacts with MTMR4; negatively regulates TGF-beta signaling through SMAD2 dephosphorylation and retention in endosomes. Post-translationally, in response to TGF-beta, phosphorylated on the C-terminal SXS motif by TGF-beta and activin type 1 receptor kinases, phosphorylation declines progressively in a KMT5A-dependent manner. Phosphorylation in this motif is required for interaction with a number of proteins including SMURF2, SNON and SMAD4 in response to TGF-beta. Dephosphorylated in this motif by PPM1A leading to disruption of the SMAD2/3-SMAD4 complex, nuclear export and termination of the TGF-beta signaling. In response to decorin, the naturally occurring inhibitor of TGF-beta signaling, phosphorylated on Ser-240 by CaMK2. Phosphorylated by MAPK3 upon EGF stimulation; which increases transcriptional activity and stability, and is blocked by calmodulin. Phosphorylated by PDPK1. In terms of processing, in response to TGF-beta, ubiquitinated by NEDD4L; which promotes its degradation. Monoubiquitinated, leading to prevent DNA-binding. Deubiquitination by USP15 alleviates inhibition and promotes activation of TGF-beta target genes. Ubiquitinated by RNF111, leading to its degradation: only SMAD2 proteins that are 'in use' are targeted by RNF111, RNF111 playing a key role in activating SMAD2 and regulating its turnover. Acetylated on Lys-19 by coactivators in response to TGF-beta signaling, which increases transcriptional activity.

Its subcellular location is the cytoplasm. It localises to the nucleus. Functionally, receptor-regulated SMAD (R-SMAD) that is an intracellular signal transducer and transcriptional modulator activated by TGF-beta (transforming growth factor) and activin type 1 receptor kinases. Binds the TRE element in the promoter region of many genes that are regulated by TGF-beta and, on formation of the SMAD2/SMAD4 complex, activates transcription. Promotes TGFB1-mediated transcription of odontoblastic differentiation genes in dental papilla cells. Positively regulates PDPK1 kinase activity by stimulating its dissociation from the 14-3-3 protein YWHAQ which acts as a negative regulator. The polypeptide is Mothers against decapentaplegic homolog 2 (Smad2) (Mus musculus (Mouse)).